A 429-amino-acid polypeptide reads, in one-letter code: Enolase (429 aa).

Glutamine 164 is a (2R)-2-phosphoglycerate binding site. The Proton donor role is filled by glutamate 206. The Mg(2+) site is built by aspartate 243, glutamate 286, and aspartate 313. Lysine 338, arginine 367, serine 368, and lysine 389 together coordinate (2R)-2-phosphoglycerate. Lysine 338 functions as the Proton acceptor in the catalytic mechanism.

This sequence belongs to the enolase family. Requires Mg(2+) as cofactor.

Its subcellular location is the cytoplasm. It is found in the secreted. The protein localises to the cell surface. The enzyme catalyses (2R)-2-phosphoglycerate = phosphoenolpyruvate + H2O. It participates in carbohydrate degradation; glycolysis; pyruvate from D-glyceraldehyde 3-phosphate: step 4/5. In terms of biological role, catalyzes the reversible conversion of 2-phosphoglycerate (2-PG) into phosphoenolpyruvate (PEP). It is essential for the degradation of carbohydrates via glycolysis. This chain is Enolase, found in Thermosipho africanus (strain TCF52B).